The primary structure comprises 295 residues: Bifunctional protein FolD (295 aa).

NADP(+) is bound by residues 166–168 (GRS), serine 191, and isoleucine 232.

It belongs to the tetrahydrofolate dehydrogenase/cyclohydrolase family. In terms of assembly, homodimer.

The catalysed reaction is (6R)-5,10-methylene-5,6,7,8-tetrahydrofolate + NADP(+) = (6R)-5,10-methenyltetrahydrofolate + NADPH. The enzyme catalyses (6R)-5,10-methenyltetrahydrofolate + H2O = (6R)-10-formyltetrahydrofolate + H(+). It functions in the pathway one-carbon metabolism; tetrahydrofolate interconversion. Its function is as follows. Catalyzes the oxidation of 5,10-methylenetetrahydrofolate to 5,10-methenyltetrahydrofolate and then the hydrolysis of 5,10-methenyltetrahydrofolate to 10-formyltetrahydrofolate. This Wolbachia pipientis subsp. Culex pipiens (strain wPip) protein is Bifunctional protein FolD.